Here is a 93-residue protein sequence, read N- to C-terminus: Acylphosphatase (93 aa).

One can recognise an Acylphosphatase-like domain in the interval 5 to 93 (TAILRVTGFV…EDRKTFDIVY (89 aa)). Active-site residues include Arg20 and Asn38.

Belongs to the acylphosphatase family.

It catalyses the reaction an acyl phosphate + H2O = a carboxylate + phosphate + H(+). The sequence is that of Acylphosphatase (acyP) from Listeria welshimeri serovar 6b (strain ATCC 35897 / DSM 20650 / CCUG 15529 / CIP 8149 / NCTC 11857 / SLCC 5334 / V8).